A 737-amino-acid polypeptide reads, in one-letter code: Dual specificity protein kinase KNS1 (737 aa).

Disordered stretches follow at residues 1-33 (MSQNIQIGTRKRSRANMNNSTTTGPANNTSSNK) and 270-290 (SSLRKFTSNGSSESASSNKSN). Residues 15–33 (ANMNNSTTTGPANNTSSNK) are compositionally biased toward polar residues. The span at 277–290 (SNGSSESASSNKSN) shows a compositional bias: low complexity. Residues 313–720 (FVVKDLLGQG…AKDALDHEWF (408 aa)) enclose the Protein kinase domain. ATP-binding positions include 319 to 327 (LGQGTFGKV) and Lys343. Asp440 functions as the Proton acceptor in the catalytic mechanism. Thr562 is modified (phosphothreonine).

The protein belongs to the protein kinase superfamily. CMGC Ser/Thr protein kinase family. Lammer subfamily. Post-translationally, phosphorylated (auto-) on Ser/Thr/Tyr.

It carries out the reaction L-seryl-[protein] + ATP = O-phospho-L-seryl-[protein] + ADP + H(+). The catalysed reaction is L-threonyl-[protein] + ATP = O-phospho-L-threonyl-[protein] + ADP + H(+). It catalyses the reaction L-tyrosyl-[protein] + ATP = O-phospho-L-tyrosyl-[protein] + ADP + H(+). In terms of biological role, nonessential protein kinase. The protein is Dual specificity protein kinase KNS1 (KNS1) of Saccharomyces cerevisiae (strain ATCC 204508 / S288c) (Baker's yeast).